The primary structure comprises 371 residues: tRNA-specific 2-thiouridylase MnmA (371 aa).

ATP contacts are provided by residues 12–19 (GMSGGVDS) and Met38. An interaction with target base in tRNA region spans residues 98–100 (NPD). Catalysis depends on Cys103, which acts as the Nucleophile. Cys103 and Cys200 are disulfide-bonded. Gly128 contacts ATP. Positions 150-152 (KDQ) are interaction with tRNA. The Cysteine persulfide intermediate role is filled by Cys200. Residues 312 to 313 (RY) form an interaction with tRNA region.

This sequence belongs to the MnmA/TRMU family. In terms of assembly, interacts with TusE.

The protein resides in the cytoplasm. It carries out the reaction S-sulfanyl-L-cysteinyl-[protein] + uridine(34) in tRNA + AH2 + ATP = 2-thiouridine(34) in tRNA + L-cysteinyl-[protein] + A + AMP + diphosphate + H(+). Functionally, catalyzes the 2-thiolation of uridine at the wobble position (U34) of tRNA(Lys), tRNA(Glu) and tRNA(Gln), leading to the formation of s(2)U34, the first step of tRNA-mnm(5)s(2)U34 synthesis. Sulfur is provided by IscS, via a sulfur-relay system. Binds ATP and its substrate tRNAs. The polypeptide is tRNA-specific 2-thiouridylase MnmA (Yersinia pestis bv. Antiqua (strain Antiqua)).